Reading from the N-terminus, the 108-residue chain is Ig kappa chain V-V region EPC 109 (108 aa).

The segment at 1 to 23 (DVQMIQSPSSLSASLGDIVTMTC) is framework-1. A disulfide bridge links Cys-23 with Cys-88. The tract at residues 24–34 (QASQGTNINLN) is complementarity-determining-1. Residues 35–49 (WFQQKPGKAPKLLIY) form a framework-2 region. Residues 50–56 (GASILEA) form a complementarity-determining-2 region. The tract at residues 57–88 (GVPSRFSGRRYGTDFTLTISSLEDEDMATYFC) is framework-3. Residues 89–97 (LQHSYLPYT) are complementarity-determining-3. The framework-4 stretch occupies residues 98–108 (FGGGTKLEKKR).

The chain is Ig kappa chain V-V region EPC 109 from Mus musculus (Mouse).